Here is a 240-residue protein sequence, read N- to C-terminus: tRNA1(Val) (adenine(37)-N6)-methyltransferase (240 aa).

It belongs to the methyltransferase superfamily. tRNA (adenine-N(6)-)-methyltransferase family.

The protein resides in the cytoplasm. It carries out the reaction adenosine(37) in tRNA1(Val) + S-adenosyl-L-methionine = N(6)-methyladenosine(37) in tRNA1(Val) + S-adenosyl-L-homocysteine + H(+). Specifically methylates the adenine in position 37 of tRNA(1)(Val) (anticodon cmo5UAC). The chain is tRNA1(Val) (adenine(37)-N6)-methyltransferase from Photobacterium profundum (strain SS9).